The following is a 435-amino-acid chain: U-box domain-containing protein 36 (435 aa).

The stretch at 227–345 forms a coiled coil; that stretch reads EAEASKRKAR…LKGKREEEEA (119 aa). In terms of domain architecture, U-box spans 352 to 426; sequence EPPQYFICPI…QEWLQLRELL (75 aa).

It carries out the reaction S-ubiquitinyl-[E2 ubiquitin-conjugating enzyme]-L-cysteine + [acceptor protein]-L-lysine = [E2 ubiquitin-conjugating enzyme]-L-cysteine + N(6)-ubiquitinyl-[acceptor protein]-L-lysine.. It functions in the pathway protein modification; protein ubiquitination. Its function is as follows. Functions as an E3 ubiquitin ligase. This is U-box domain-containing protein 36 (PUB36) from Arabidopsis thaliana (Mouse-ear cress).